Consider the following 1207-residue polypeptide: Chromosomal serine/threonine-protein kinase JIL-1 (1207 aa).

The segment covering 1–19 has biased composition (polar residues); the sequence is MSRLQKQNYEILSGTSTSR. Disordered stretches follow at residues 1–119, 164–183, and 210–230; these read MSRL…ASAR, QDME…SSSL, and SSST…LDLD. Phosphoserine occurs at positions 29 and 31. Over residues 45 to 69 the composition is skewed to polar residues; sequence LNGQLVANGNGKTRKNSNSETMTNG. Low complexity predominate over residues 88–97; that stretch reads NYNNNNNNNN. A compositionally biased stretch (polar residues) spans 98 to 108; that stretch reads SISATNGQYTN. A compositionally biased stretch (low complexity) spans 109 to 118; that stretch reads SSSKTTSASA. A compositionally biased stretch (acidic residues) spans 164–178; it reads QDMEEDEPNGIEIDE. The span at 213 to 226 shows a compositional bias: polar residues; it reads TTPSYAMPTSNSTP. The Protein kinase 1 domain maps to 261-530; sequence FKIIRVLGTG…ASEIKEHPFF (270 aa). ATP is bound by residues 267-275 and K293; that span reads LGTGAYGRV. Residue D389 is the Proton acceptor of the active site. S424 is subject to Phosphoserine. The AGC-kinase C-terminal domain occupies 531–599; it reads NGINWQELRT…VAPEHLEQMR (69 aa). T588 carries the phosphothreonine modification. A Protein kinase 2 domain is found at 623–886; the sequence is LELGTRTSNG…LSDILDSEWL (264 aa). Residues 629-637 and K652 contribute to the ATP site; that span reads TSNGAYGTC. D739 functions as the Proton acceptor in the catalytic mechanism. The residue at position 1045 (T1045) is a Phosphothreonine. S1047 carries the phosphoserine modification. Residues 1168-1197 form a disordered region; the sequence is TFPRPKAQLKRTKREPKVPRPPTRVQPERA.

The protein belongs to the protein kinase superfamily. Ser/Thr protein kinase family. In terms of assembly, interacts with lola. Interacts with proteins of the male specific lethal (MSL) dosage compensation complex; this interaction is mediated by the kinase domains. Requires Mg(2+) as cofactor. In terms of processing, autophosphorylated in vitro.

It is found in the nucleus. It localises to the chromosome. The enzyme catalyses L-seryl-[protein] + ATP = O-phospho-L-seryl-[protein] + ADP + H(+). The catalysed reaction is L-threonyl-[protein] + ATP = O-phospho-L-threonyl-[protein] + ADP + H(+). Its function is as follows. Phosphorylates 'Ser-10' of histone H3. May regulate gene expression by establishing or maintaining the structure of more open chromatin regions. Also required for normal polytene chromosome structure, for oogenesis and for viability throughout development. Regulates the structure of polytene chromosomes in salivary glands. May phosphorylate 'Ser-1' of histone H2A. The polypeptide is Chromosomal serine/threonine-protein kinase JIL-1 (Drosophila melanogaster (Fruit fly)).